We begin with the raw amino-acid sequence, 101 residues long: uncharacterized protein (101 aa).

Residues 68–90 form a helical membrane-spanning segment; the sequence is LAFAFCGRANTFISCFISFASLI.

It localises to the membrane. This is an uncharacterized protein from Saccharomyces cerevisiae (strain ATCC 204508 / S288c) (Baker's yeast).